We begin with the raw amino-acid sequence, 425 residues long: MISNFKSISLTYRKAPLEIRERVALNEAECKSLMLRIKDFTDTAELLILSTCNRTEIYYTSNEDYSNDIIKLLGVEKNITGLIQQKEYFEIYNEQADAVLHLFEVGIGLDSQVVGDMQIVNQVKYAYQWSADLNLAGPFLHRLMHTIFFTNKRVVQETAFRDGAASVSYATVELSEELLSATPNANILIVGLGEIGADVCRNFKANTSFKNITLTNRSPLKSEALAAECGIEHVPFETLWEAVAKADLVISSVAKEEPLFTKEEIQKLSILSHKYFIDLSVPRSVDARAEELPGIIVYDIDHIQNRSNEALENRLNAIPHVRKIILDSIVEFNEWSKEMEVSPTINKLKNALEQIRKEELSRFVKQLSDEEAKKVDEITKSIMQKIIKLPVLQLKAACKRGEAETLIDVLNDLFNLDKQPEQIRD.

Residues 51–54, Ser111, 116–118, and Gln122 contribute to the substrate site; these read TCNR and DMQ. The Nucleophile role is filled by Cys52. NADP(+) is bound at residue 191–196; it reads GLGEIG.

This sequence belongs to the glutamyl-tRNA reductase family. Homodimer.

The enzyme catalyses (S)-4-amino-5-oxopentanoate + tRNA(Glu) + NADP(+) = L-glutamyl-tRNA(Glu) + NADPH + H(+). The protein operates within porphyrin-containing compound metabolism; protoporphyrin-IX biosynthesis; 5-aminolevulinate from L-glutamyl-tRNA(Glu): step 1/2. Catalyzes the NADPH-dependent reduction of glutamyl-tRNA(Glu) to glutamate 1-semialdehyde (GSA). This chain is Glutamyl-tRNA reductase, found in Cytophaga hutchinsonii (strain ATCC 33406 / DSM 1761 / CIP 103989 / NBRC 15051 / NCIMB 9469 / D465).